The following is a 187-amino-acid chain: MTDTLDLDRAVAALTQGGVIAYPTEAVWGLGCDPRQRAAVMRLLEIKRRPVEKGVIVVASSVDVLRDWVDIDALEPARRRDVLTSWPGPHTWILPITDRAPRWVTGEHDGLAVRISAHPVVAALCGAWGAPLVSTSANLAGEPPARSRAALDPALLATIDGVVDGETGALAQPTQIRDARSGQILRD.

The 184-residue stretch at 4–187 (TLDLDRAVAA…DARSGQILRD (184 aa)) folds into the YrdC-like domain.

This sequence belongs to the SUA5 family. TsaC subfamily.

Its subcellular location is the cytoplasm. It catalyses the reaction L-threonine + hydrogencarbonate + ATP = L-threonylcarbamoyladenylate + diphosphate + H2O. Required for the formation of a threonylcarbamoyl group on adenosine at position 37 (t(6)A37) in tRNAs that read codons beginning with adenine. Catalyzes the conversion of L-threonine, HCO(3)(-)/CO(2) and ATP to give threonylcarbamoyl-AMP (TC-AMP) as the acyladenylate intermediate, with the release of diphosphate. The chain is Threonylcarbamoyl-AMP synthase from Xanthomonas axonopodis pv. citri (strain 306).